The following is a 475-amino-acid chain: Ribulose bisphosphate carboxylase large chain (475 aa).

A propeptide spanning residues 1–2 is cleaved from the precursor; the sequence is MV. The residue at position 3 (proline 3) is an N-acetylproline. N6,N6,N6-trimethyllysine is present on lysine 14. Substrate is bound by residues asparagine 123 and threonine 173. Lysine 175 (proton acceptor) is an active-site residue. Residue lysine 177 participates in substrate binding. Lysine 201, aspartate 203, and glutamate 204 together coordinate Mg(2+). Lysine 201 carries the N6-carboxylysine modification. The active-site Proton acceptor is histidine 294. Positions 295, 327, and 379 each coordinate substrate.

The protein belongs to the RuBisCO large chain family. Type I subfamily. As to quaternary structure, heterohexadecamer of 8 large chains and 8 small chains. Mg(2+) is required as a cofactor.

Its subcellular location is the plastid. The protein localises to the chloroplast. The enzyme catalyses 2 (2R)-3-phosphoglycerate + 2 H(+) = D-ribulose 1,5-bisphosphate + CO2 + H2O. It catalyses the reaction D-ribulose 1,5-bisphosphate + O2 = 2-phosphoglycolate + (2R)-3-phosphoglycerate + 2 H(+). Functionally, ruBisCO catalyzes two reactions: the carboxylation of D-ribulose 1,5-bisphosphate, the primary event in carbon dioxide fixation, as well as the oxidative fragmentation of the pentose substrate in the photorespiration process. Both reactions occur simultaneously and in competition at the same active site. This chain is Ribulose bisphosphate carboxylase large chain, found in Stigeoclonium helveticum (Green alga).